Reading from the N-terminus, the 545-residue chain is Chaperonin GroEL 2 (545 aa).

Residues 29 to 32, 86 to 90, glycine 414, and aspartate 499 each bind ATP; these read TLGP and DGTTT.

It belongs to the chaperonin (HSP60) family. Forms a cylinder of 14 subunits composed of two heptameric rings stacked back-to-back. Interacts with the co-chaperonin GroES.

It localises to the cytoplasm. It catalyses the reaction ATP + H2O + a folded polypeptide = ADP + phosphate + an unfolded polypeptide.. In terms of biological role, together with its co-chaperonin GroES, plays an essential role in assisting protein folding. The GroEL-GroES system forms a nano-cage that allows encapsulation of the non-native substrate proteins and provides a physical environment optimized to promote and accelerate protein folding. This chain is Chaperonin GroEL 2, found in Chloroflexus aurantiacus (strain ATCC 29366 / DSM 635 / J-10-fl).